Reading from the N-terminus, the 392-residue chain is Putative nickel insertion protein (392 aa).

This sequence belongs to the LarC family.

This chain is Putative nickel insertion protein, found in Pelobacter propionicus (strain DSM 2379 / NBRC 103807 / OttBd1).